The sequence spans 678 residues: uncharacterized protein (678 aa).

The next 2 helical transmembrane spans lie at 14–34 and 180–200; these read LMFA…WTGL and GAVI…IGGF.

This sequence belongs to the mycobacterial PPE family.

It is found in the cell membrane. This is an uncharacterized protein from Mycobacterium tuberculosis (strain ATCC 25618 / H37Rv).